Here is a 62-residue protein sequence, read N- to C-terminus: MPKIIEAIYENGVFKPLQKVDLKEGERIKLRIEEGILDVIKKYQGKFKLTEKDIEKFLEERR.

Belongs to the UPF0165 family.

Functionally, possibly the antitoxin component of a type II toxin-antitoxin (TA) system. The polypeptide is Putative antitoxin AF_1095 (Archaeoglobus fulgidus (strain ATCC 49558 / DSM 4304 / JCM 9628 / NBRC 100126 / VC-16)).